Reading from the N-terminus, the 610-residue chain is MISTVLRRSILGTSRRTLAASVTSINAALFHNLAPAAATVSDLANGATNVKSLPSNSSPFGVKVRDFHVKSVPSEFRSSIVSSAGFAAQEYAPSYENDGGIGDSESVGSSGGGDGLAIADLGISPEIVKALKGRGIEKLFPIQKAVLEPAMEGRDMIGRARTGTGKTLAFGIPIIDKIIKFNAKHGRGKNPQCLVLAPTRELARQVEKEFRESAPSLDTICLYGGTPIGQQMRELNYGIDVAVGTPGRIIDLMKRGALNLSEVQFVVLDEADQMLQVGFAEDVEIILQKLPAKRQSMMFSATMPSWIRSLTKKYLNNPLTIDLVGDSDQKLADGITMYSIAADSYGRASIIGPLVKEHGKGGKCIVFTQTKRDADRLAFGLAKSYKCEALHGDISQAQRERTLAGFRDGNFSILVATDVAARGLDVPNVDLVIHYELPNNTETFVHRTGRTGRAGKKGSAILIHGQDQTRAVKMIEKEVGSRFNELPSIAVERGSASMFEGVGARSGGSFGGGRSGGGGYGSYGSSSGRSGGGSYGGYGGSSGRSGGGGGSYGGSGGSSSRYSGGSDRSSGFGSFGSGGSSGGFGSDRSSQSSGRSSFGGFGSNDGKRSY.

A mitochondrion-targeting transit peptide spans 1 to 66; that stretch reads MISTVLRRSI…SSPFGVKVRD (66 aa). The short motif at 116–144 is the Q motif element; it reads LAIADLGISPEIVKALKGRGIEKLFPIQK. The Helicase ATP-binding domain occupies 147–321; it reads LEPAMEGRDM…KKYLNNPLTI (175 aa). 160–167 is an ATP binding site; that stretch reads ARTGTGKT. The DEAD box motif lies at 269–272; sequence DEAD. The 145-residue stretch at 350–494 folds into the Helicase C-terminal domain; it reads IIGPLVKEHG…ELPSIAVERG (145 aa). A compositionally biased stretch (gly residues) spans 542 to 557; that stretch reads SGRSGGGGGSYGGSGG. The disordered stretch occupies residues 542 to 610; the sequence is SGRSGGGGGS…FGSNDGKRSY (69 aa). The segment covering 558–572 has biased composition (low complexity); it reads SSSRYSGGSDRSSGF. Over residues 573 to 585 the composition is skewed to gly residues; that stretch reads GSFGSGGSSGGFG. Positions 586 to 596 are enriched in low complexity; that stretch reads SDRSSQSSGRS.

This sequence belongs to the DEAD box helicase family. DDX21/DDX50 subfamily.

Its subcellular location is the mitochondrion. It catalyses the reaction ATP + H2O = ADP + phosphate + H(+). The sequence is that of DEAD-box ATP-dependent RNA helicase 9, mitochondrial (RH9) from Arabidopsis thaliana (Mouse-ear cress).